The primary structure comprises 428 residues: MRQPASEGLAAEMRRLAEASSDASRALSRAQPRAKDEALRAAADAIGRRAKEILAASAEDVAAARAAGQSAAYLDRLALDPKRLDGIAAALREVAALPDPVGEVTATWRRPNGLSVKKVRIPLGVVLMVYEARPNVTVDAAALCVKSGNAAILRPGSDALRSSLALAAAFAEGLAAAGLPAASAQVVPTSDREATFELLQLDDLIDLAIPRGGPSLIRAVAERSRVPVVKHYQGVCHLFLDQSAPLQQAIDLALNGKVQRPAVCNALECLLVHREAAGRLLPAVGRALVDAGVELRSCPTSTTILARAGVPAVTAAPDDYGKEFSDLILAVRVVHDLDGALDHIARYGSLHTEAILTRDLASARRFEREVTASAVMVNASTRFNDGGELGLGAEIGISTTKLHAFGPMGLAELTTQKFVVEGDGQVRS.

Belongs to the gamma-glutamyl phosphate reductase family.

The protein resides in the cytoplasm. It catalyses the reaction L-glutamate 5-semialdehyde + phosphate + NADP(+) = L-glutamyl 5-phosphate + NADPH + H(+). The protein operates within amino-acid biosynthesis; L-proline biosynthesis; L-glutamate 5-semialdehyde from L-glutamate: step 2/2. In terms of biological role, catalyzes the NADPH-dependent reduction of L-glutamate 5-phosphate into L-glutamate 5-semialdehyde and phosphate. The product spontaneously undergoes cyclization to form 1-pyrroline-5-carboxylate. The polypeptide is Gamma-glutamyl phosphate reductase (Anaeromyxobacter sp. (strain Fw109-5)).